Reading from the N-terminus, the 122-residue chain is MNAPAAFESFLLLDDKKIYIEKDTKVPNAAIFTINKEDHTLGNMLKIQLLKDPEVLFAGYKNPHPLEHKILLRVQTTNATTPADALTTAITDLVGELSLLEHRIDSAIKKCTQSTDTERGYN.

The protein belongs to the archaeal Rpo11/eukaryotic RPB11/RPC19 RNA polymerase subunit family. As to quaternary structure, component of the RNA polymerase II (Pol II) complex consisting of 12 subunits.

It is found in the nucleus. Functionally, DNA-dependent RNA polymerase catalyzes the transcription of DNA into RNA using the four ribonucleoside triphosphates as substrates. Component of RNA polymerase II which synthesizes mRNA precursors and many functional non-coding RNAs. Pol II is the central component of the basal RNA polymerase II transcription machinery. It is composed of mobile elements that move relative to each other. RPB11 is part of the core element with the central large cleft. This Caenorhabditis briggsae protein is Probable DNA-directed RNA polymerase II subunit RPB11 (rpb-11).